A 238-amino-acid chain; its full sequence is Large ribosomal subunit protein uL2 (238 aa).

A compositionally biased stretch (polar residues) spans 1 to 11 (MGKRLISQNRG). Disordered regions lie at residues 1 to 22 (MGKR…APSH) and 202 to 223 (FGGG…APPG).

This sequence belongs to the universal ribosomal protein uL2 family. Part of the 50S ribosomal subunit. Forms a bridge to the 30S subunit in the 70S ribosome.

Functionally, one of the primary rRNA binding proteins. Required for association of the 30S and 50S subunits to form the 70S ribosome, for tRNA binding and peptide bond formation. It has been suggested to have peptidyltransferase activity; this is somewhat controversial. Makes several contacts with the 16S rRNA in the 70S ribosome. The polypeptide is Large ribosomal subunit protein uL2 (Methanosarcina mazei (strain ATCC BAA-159 / DSM 3647 / Goe1 / Go1 / JCM 11833 / OCM 88) (Methanosarcina frisia)).